Reading from the N-terminus, the 1225-residue chain is Cohesin subunit SA-3 (1225 aa).

Positions 1 to 97 (MSSPLQRAVG…HSRKQSEPPA (97 aa)) are disordered. Over residues 15–26 (ALSASSSSSASL) the composition is skewed to low complexity. Acidic residues predominate over residues 45-54 (LADEDTDFED). 2 stretches are compositionally biased toward basic residues: residues 59–69 (NVKKRAAKRPP) and 76–90 (KHPK…RHSR). The SCD domain maps to 309–394 (FVHRYRDVLP…SRFKDRMVSM (86 aa)). 3 disordered regions span residues 546 to 567 (SEGH…KERK), 1063 to 1113 (AETS…STAV), and 1177 to 1225 (EEDE…IEDF). Positions 1078–1089 (VEGPAKPNREDV) are enriched in basic and acidic residues. The segment covering 1090–1099 (SSSQEESLQL) has biased composition (low complexity). Residues 1177–1191 (EEDEEEELEIQDESN) show a composition bias toward acidic residues. Residues 1198–1209 (DMQASSYSSTSE) show a composition bias toward polar residues. At Ser1203 the chain carries Phosphoserine. Over residues 1216-1225 (DSTELDIEDF) the composition is skewed to acidic residues.

It belongs to the SCC3 family. As to quaternary structure, component of the meiosis-specific cohesin complex, which also contains the SMC1 (SMC1A or SMC1B) and SMC3 heterodimer. Such complex likely contains RAD21, or the meiosis-specific related protein REC8. Interacts with CCDC79/TERB1; recruiting cohesin to telomeres to develop structural rigidity. Post-translationally, phosphorylated. Testis specific.

It localises to the nucleus. The protein localises to the chromosome. It is found in the centromere. In terms of biological role, meiosis specific component of cohesin complex. The cohesin complex is required for the cohesion of sister chromatids after DNA replication. The cohesin complex apparently forms a large proteinaceous ring within which sister chromatids can be trapped. At anaphase, the complex is cleaved and dissociates from chromatin, allowing sister chromatids to segregate. The meiosis-specific cohesin complex probably replaces mitosis specific cohesin complex when it dissociates from chromatin during prophase I. This chain is Cohesin subunit SA-3 (STAG3), found in Homo sapiens (Human).